The chain runs to 554 residues: uncharacterized protein (554 aa).

This sequence to M.jannaschii MJ0047, MJ0162 and MJ1236.

This is an uncharacterized protein from Synechocystis sp. (strain ATCC 27184 / PCC 6803 / Kazusa).